We begin with the raw amino-acid sequence, 901 residues long: MutS protein homolog 5 (901 aa).

Residue 643–650 (GANASGKS) coordinates ATP.

The protein belongs to the DNA mismatch repair MutS family. As to quaternary structure, heterooligomer of MSH4 and MSH5.

In terms of biological role, involved in meiotic recombination. Facilitate crossovers between homologs during meiosis. This is MutS protein homolog 5 (MSH5) from Saccharomyces cerevisiae (strain ATCC 204508 / S288c) (Baker's yeast).